The sequence spans 989 residues: Phosphoenolpyruvate carboxylase (989 aa).

Active-site residues include His-175 and Lys-630.

Belongs to the PEPCase type 1 family. Mg(2+) is required as a cofactor.

It catalyses the reaction oxaloacetate + phosphate = phosphoenolpyruvate + hydrogencarbonate. In terms of biological role, forms oxaloacetate, a four-carbon dicarboxylic acid source for the tricarboxylic acid cycle. In Prochlorococcus marinus subsp. pastoris (strain CCMP1986 / NIES-2087 / MED4), this protein is Phosphoenolpyruvate carboxylase.